The chain runs to 496 residues: MGSLEMVPMGAGPPSPGGDPDGDDGGNNSQYPSASGSSGNTPTPPNDEERESNEEPPPPYEDPYWGNGDRHSDYQPLGTQDQSLYLGLQHDGNDGLPPPPYSPRDDSSQHIYEEAGRGSMNPVCLPVIVAPYLFWLAAIAASCFTASVSTVVTATGLALSLLLLAAVASSYAAAQRKLLTPVTVLTAVVFFAICLTWRIEDPPFNSLLFALLAAAGGLQGIYVLVMLVLLILAYRRRWRRLTVCGGIMFLACVLVLIVDAVLQLSPLLGAVTVVSMTLLLLAFVLWLSSPGGLGTLGAALLTLAAALALLASLILGTLNLTTMFLLMLLWTLVVLLICSSCSSCPLTKILLARLFLYALALLLLASALIAGGSILQTNFKSLSSTEFIPNLFCMLLLIVAGILFILAILTEWGSGNRTYGPVFMCLGGLLTMVAGAVWLTVMTNTLLSAWILTAGFLIFLIGFALFGVIRCCRYCCYYCLTLESEERPPTPYRNTV.

The interval 1–108 (MGSLEMVPMG…PPYSPRDDSS (108 aa)) is disordered. The Cytoplasmic portion of the chain corresponds to 1–123 (MGSLEMVPMG…EAGRGSMNPV (123 aa)). Positions 27–41 (NNSQYPSASGSSGNT) are enriched in polar residues. The PPxY motif motif lies at 97–101 (PPPPY). Residue tyrosine 112 is modified to Phosphotyrosine; by host. Residues 124–144 (CLPVIVAPYLFWLAAIAASCF) traverse the membrane as a helical segment. Topologically, residues 145–147 (TAS) are extracellular. A helical transmembrane segment spans residues 148–168 (VSTVVTATGLALSLLLLAAVA). Topologically, residues 169-177 (SSYAAAQRK) are cytoplasmic. Residues 178 to 197 (LLTPVTVLTAVVFFAICLTW) form a helical membrane-spanning segment. The Extracellular portion of the chain corresponds to 198–210 (RIEDPPFNSLLFA). A helical membrane pass occupies residues 211–231 (LLAAAGGLQGIYVLVMLVLLI). Over 232–240 (LAYRRRWRR) the chain is Cytoplasmic. A helical transmembrane segment spans residues 241 to 261 (LTVCGGIMFLACVLVLIVDAV). Topologically, residues 262-266 (LQLSP) are extracellular. A helical transmembrane segment spans residues 267–287 (LLGAVTVVSMTLLLLAFVLWL). Residues 288–295 (SSPGGLGT) lie on the Cytoplasmic side of the membrane. The chain crosses the membrane as a helical span at residues 296–316 (LGAALLTLAAALALLASLILG). A topological domain (extracellular) is located at residue threonine 317. The chain crosses the membrane as a helical span at residues 318-338 (LNLTTMFLLMLLWTLVVLLIC). The Cytoplasmic portion of the chain corresponds to 339–353 (SSCSSCPLTKILLAR). A helical transmembrane segment spans residues 354–374 (LFLYALALLLLASALIAGGSI). Topologically, residues 375 to 387 (LQTNFKSLSSTEF) are extracellular. A helical membrane pass occupies residues 388–408 (IPNLFCMLLLIVAGILFILAI). At 409–421 (LTEWGSGNRTYGP) the chain is on the cytoplasmic side. A helical transmembrane segment spans residues 422-442 (VFMCLGGLLTMVAGAVWLTVM). The Extracellular segment spans residues 443–448 (TNTLLS). Residues 449–469 (AWILTAGFLIFLIGFALFGVI) traverse the membrane as a helical segment. At 470-496 (RCCRYCCYYCLTLESEERPPTPYRNTV) the chain is on the cytoplasmic side.

The protein belongs to the herpesviridae LMP-2 family. As to quaternary structure, the cytoplasmic N-terminal domain interacts with human SRC family protein tyrosine kinases SYK and LYN. Binds human ITCH, WWP2 and NEDD4L. Phosphorylated on cytoplasmic N-terminal tyrosine residues, possibly by human LYN. In terms of processing, can be ubiquitinated by human ITCH and WWP2 on the N-terminus in a lysine-independent manner.

The protein resides in the host cell membrane. It is found in the host endomembrane system. The protein localises to the host cytoplasm. Its subcellular location is the host perinuclear region. Its function is as follows. Maintains EBV latent infection of B-lymphocyte, by preventing lytic reactivation of the virus in response to surface immunoglobulin (sIg) cross-linking. Acts like a dominant negative inhibitor of the sIg-associated protein tyrosine kinases, LYN and SYK. Also blocks translocation of the B-cell antigen receptor (BCR) into lipid rafts, preventing the subsequent signaling and accelerated internalization of the BCR upon BCR cross-linking. Serves as a molecular scaffold to recruit SYK, LYN and E3 protein-ubiquitin ligases, such as ITCH and NEDD4L, leading to ubiquitination and potential degradation of both tyrosines kinases. Possesses a constitutive signaling activity in non-transformed cells, inducing bypass of normal B lymphocyte developmental checkpoints allowing immunoglobulin-negative cells to colonize peripheral lymphoid organs. Functionally, may be a negative regulator of isoform LMP2A. The protein is Latent membrane protein 2 (LMP2) of Homo sapiens (Human).